The chain runs to 176 residues: Transcriptional repressor NrdR (176 aa).

Residues 3 to 34 (CPFCQHTDSRVLESRSAEAGQSVRRRRECLQC) fold into a zinc finger. The ATP-cone domain maps to 49 to 139 (ITVIKRNQDR…VYRQFRGIRD (91 aa)). The segment at 151 to 176 (GDGPLPSVLDEPYEDTAQPTIMISPQ) is disordered. Residues 167–176 (AQPTIMISPQ) are compositionally biased toward polar residues.

This sequence belongs to the NrdR family. Requires Zn(2+) as cofactor.

Functionally, negatively regulates transcription of bacterial ribonucleotide reductase nrd genes and operons by binding to NrdR-boxes. This is Transcriptional repressor NrdR from Acaryochloris marina (strain MBIC 11017).